The sequence spans 539 residues: Hydroxylamine reductase (539 aa).

Residues C3, C6, C14, and C20 each contribute to the [4Fe-4S] cluster site. The hybrid [4Fe-2O-2S] cluster site is built by H232, E256, C300, C392, C420, C445, E480, and K482. Position 392 is a cysteine persulfide (C392).

It belongs to the HCP family. [4Fe-4S] cluster is required as a cofactor. Requires hybrid [4Fe-2O-2S] cluster as cofactor.

Its subcellular location is the cytoplasm. The enzyme catalyses A + NH4(+) + H2O = hydroxylamine + AH2 + H(+). Functionally, catalyzes the reduction of hydroxylamine to form NH(3) and H(2)O. The protein is Hydroxylamine reductase of Chlorobaculum tepidum (strain ATCC 49652 / DSM 12025 / NBRC 103806 / TLS) (Chlorobium tepidum).